We begin with the raw amino-acid sequence, 333 residues long: Glycerol-3-phosphate dehydrogenase [NAD(P)+] (333 aa).

The NADPH site is built by Y14, H34, and K108. 3 residues coordinate sn-glycerol 3-phosphate: K108, G137, and T139. NADPH is bound at residue A141. The sn-glycerol 3-phosphate site is built by K193, D247, S257, R258, and N259. K193 (proton acceptor) is an active-site residue. R258 provides a ligand contact to NADPH. NADPH-binding residues include L282 and E284.

It belongs to the NAD-dependent glycerol-3-phosphate dehydrogenase family.

The protein resides in the cytoplasm. The enzyme catalyses sn-glycerol 3-phosphate + NAD(+) = dihydroxyacetone phosphate + NADH + H(+). It catalyses the reaction sn-glycerol 3-phosphate + NADP(+) = dihydroxyacetone phosphate + NADPH + H(+). Its pathway is membrane lipid metabolism; glycerophospholipid metabolism. Its function is as follows. Catalyzes the reduction of the glycolytic intermediate dihydroxyacetone phosphate (DHAP) to sn-glycerol 3-phosphate (G3P), the key precursor for phospholipid synthesis. The polypeptide is Glycerol-3-phosphate dehydrogenase [NAD(P)+] (Blochmanniella floridana).